Here is a 295-residue protein sequence, read N- to C-terminus: Mycothiol acetyltransferase (295 aa).

A 1D-myo-inositol 2-(L-cysteinylamino)-2-deoxy-alpha-D-glucopyranoside-binding site is contributed by Glu-30. Position 62 to 64 (62 to 64 (LVV)) interacts with acetyl-CoA. The 159-residue stretch at 137-295 (VTVRAFRADS…DDDTHVQYRR (159 aa)) folds into the N-acetyltransferase domain. Positions 165, 209, and 227 each coordinate 1D-myo-inositol 2-(L-cysteinylamino)-2-deoxy-alpha-D-glucopyranoside. Acetyl-CoA is bound by residues 231–233 (VGI) and 238–244 (QGRGLGK). Tyr-265 lines the 1D-myo-inositol 2-(L-cysteinylamino)-2-deoxy-alpha-D-glucopyranoside pocket.

This sequence belongs to the acetyltransferase family. MshD subfamily. As to quaternary structure, monomer.

It catalyses the reaction 1D-myo-inositol 2-(L-cysteinylamino)-2-deoxy-alpha-D-glucopyranoside + acetyl-CoA = mycothiol + CoA + H(+). Catalyzes the transfer of acetyl from acetyl-CoA to desacetylmycothiol (Cys-GlcN-Ins) to form mycothiol. In Nocardioides sp. (strain ATCC BAA-499 / JS614), this protein is Mycothiol acetyltransferase.